The sequence spans 905 residues: MEGESSRFEIHTPVSDKKKKKCSIHKERPQKHSHEIFRDSSLVNEQSQITRRKKRKKDFQHLISSPLKKSRICDETANATSTLKKRKKRRYSALEVDEEAGVTVVLVDKENINNTPKHFRKDVDVVCVDMSIEQKLPRKPKTDKFQVLAKSHAHKSEALHSKVREKKNKKHQRKAASWESQRARDTLPQSESHQEESWLSVGPGGEITELPASAHKNKSKKKKKKSSNREYETLAMPEGSQAGREAGTDMQESQPTVGLDDETPQLLGPTHKKKSKKKKKKKSNHQEFEALAMPEGSQVGSEVGADMQESRPAVGLHGETAGIPAPAYKNKSKKKKKKSNHQEFEAVAMPESLESAYPEGSQVGSEVGTVEGSTALKGFKESNSTKKKSKKRKLTSVKRARVSGDDFSVPSKNSESTLFDSVEGDGAMMEEGVKSRPRQKKTQACLASKHVQEAPRLEPANEEHNVETAEDSEIRYLSADSGDADDSDADLGSAVKQLQEFIPNIKDRATSTIKRMYRDDLERFKEFKAQGVAIKFGKFSVKENKQLEKNVEDFLALTGIESADKLLYTDRYPEEKSVITNLKRRYSFRLHIGRNIARPWKLIYYRAKKMFDVNNYKGRYSEGDTEKLKMYHSLLGNDWKTIGEMVARSSLSVALKFSQISSQRNRGAWSKSETRKLIKAVEEVILKKMSPQELKEVDSKLQENPESCLSIVREKLYKGISWVEVEAKVQTRNWMQCKSKWTEILTKRMTNGRRIYYGMNALRAKVSLIERLYEINVEDTNEIDWEDLASAIGDVPPSYVQTKFSRLKAVYVPFWQKKTFPEIIDYLYETTLPLLKEKLEKMMEKKGTKIQTPAAPKQVFPFRDIFYYEDDSEGEDIEKESEGQAPCMAHACNSSTLGGQGRWII.

2 stretches are compositionally biased toward basic and acidic residues: residues 1–16 (MEGE…PVSD) and 24–33 (IHKERPQKHS). The interval 1 to 33 (MEGESSRFEIHTPVSDKKKKKCSIHKERPQKHS) is disordered. The interval 1–223 (MEGESSRFEI…AHKNKSKKKK (223 aa)) is N-terminal region (NRD). The residue at position 65 (serine 65) is a Phosphoserine. The segment at 151–443 (SHAHKSEALH…KSRPRQKKTQ (293 aa)) is disordered. Composition is skewed to basic residues over residues 163–174 (VREKKNKKHQRK) and 215–226 (HKNKSKKKKKKS). Position 240 is a phosphoserine (serine 240). Threonine 248 is subject to Phosphothreonine. 3 stretches are compositionally biased toward basic residues: residues 270–283 (THKK…KKKS), 330–339 (NKSKKKKKKS), and 385–401 (TKKK…KRAR). Serine 403 is modified (phosphoserine). A compositionally biased stretch (polar residues) spans 410-419 (PSKNSESTLF). A Phosphotyrosine modification is found at tyrosine 476. Phosphoserine is present on residues serine 478, serine 481, and serine 487. The may be involved in interaction with ARF stretch occupies residues 498–886 (LQEFIPNIKD…IEKESEGQAP (389 aa)). 2 Myb-like domains span residues 612–661 (DVNN…SQIS) and 661–745 (SSQR…TEIL). A Glycyl lysine isopeptide (Lys-Gly) (interchain with G-Cter in SUMO2) cross-link involves residue lysine 700. Serine 872 is modified (phosphoserine).

As to quaternary structure, oligomer. The oligomeric structure enables to interact simultaneously with two separate DNA fragments. Interacts with BAZ2A/TIP5. Interacts with CAVIN1. Interacts (via the N-terminal region (NRD) and a C-terminal region) with CDKN2A/ARF; the interaction is direct. Interacts (via C-terminal region) with NPM1/B23.

The protein resides in the nucleus. The protein localises to the nucleolus. Its subcellular location is the nucleoplasm. Its function is as follows. Multifunctional nucleolar protein that terminates ribosomal gene transcription, mediates replication fork arrest and regulates RNA polymerase I transcription on chromatin. Plays a dual role in rDNA regulation, being involved in both activation and silencing of rDNA transcription. Interaction with BAZ2A/TIP5 recovers DNA-binding activity. The polypeptide is Transcription termination factor 1 (TTF1) (Homo sapiens (Human)).